Consider the following 64-residue polypeptide: DNA-binding protein 7 (64 aa).

N6-methyllysine is present on residues lysine 5 and lysine 7.

This sequence belongs to the 7 kDa DNA-binding/endoribonuclease P2 family. As to quaternary structure, monomer.

It localises to the cytoplasm. In terms of biological role, can constrain negative DNA supercoils. May be involved in maintaining the integrity of the genome at high temperature. This Sulfurisphaera tokodaii (strain DSM 16993 / JCM 10545 / NBRC 100140 / 7) (Sulfolobus tokodaii) protein is DNA-binding protein 7.